Consider the following 419-residue polypeptide: Serine--tRNA ligase (419 aa).

Residues 45–66 (ADSLRAEQKAASKSVGGASPEE) form a disordered region. Residue 226–228 (TSE) participates in L-serine binding. ATP contacts are provided by residues 257 to 259 (RRE) and Val273. Position 280 (Glu280) interacts with L-serine. 344 to 347 (ELTS) lines the ATP pocket. Thr379 provides a ligand contact to L-serine.

It belongs to the class-II aminoacyl-tRNA synthetase family. Type-1 seryl-tRNA synthetase subfamily. Homodimer. The tRNA molecule binds across the dimer.

It is found in the cytoplasm. It catalyses the reaction tRNA(Ser) + L-serine + ATP = L-seryl-tRNA(Ser) + AMP + diphosphate + H(+). The catalysed reaction is tRNA(Sec) + L-serine + ATP = L-seryl-tRNA(Sec) + AMP + diphosphate + H(+). Its pathway is aminoacyl-tRNA biosynthesis; selenocysteinyl-tRNA(Sec) biosynthesis; L-seryl-tRNA(Sec) from L-serine and tRNA(Sec): step 1/1. Functionally, catalyzes the attachment of serine to tRNA(Ser). Is also able to aminoacylate tRNA(Sec) with serine, to form the misacylated tRNA L-seryl-tRNA(Sec), which will be further converted into selenocysteinyl-tRNA(Sec). The chain is Serine--tRNA ligase from Mycobacterium ulcerans (strain Agy99).